Here is a 449-residue protein sequence, read N- to C-terminus: 5'-deoxyadenosine deaminase (449 aa).

Positions 79 and 81 each coordinate Zn(2+). The substrate site is built by Glu108 and His200. His227 is a Zn(2+) binding site. 2 residues coordinate substrate: Glu230 and Asp316. Asp316 contributes to the Zn(2+) binding site.

It belongs to the metallo-dependent hydrolases superfamily. MTA/SAH deaminase family. Homotetramer. The cofactor is Zn(2+).

The enzyme catalyses 5'-deoxyadenosine + H2O + H(+) = 5'-deoxyinosine + NH4(+). The catalysed reaction is S-adenosyl-L-homocysteine + H2O + H(+) = S-inosyl-L-homocysteine + NH4(+). It catalyses the reaction S-methyl-5'-thioadenosine + H2O + H(+) = S-methyl-5'-thioinosine + NH4(+). It carries out the reaction adenosine + H2O + H(+) = inosine + NH4(+). The protein operates within amino-acid biosynthesis; S-adenosyl-L-methionine biosynthesis. Its function is as follows. Catalyzes the deamination of three SAM-derived enzymatic products, namely 5'-deoxyadenosine, S-adenosyl-L-homocysteine, and 5'-methylthioadenosine, to produce the inosine analogs. Can also deaminate adenosine. The preferred substrate for this enzyme is 5'-deoxyadenosine, but all these substrates are efficiently deaminated. Likely functions in a S-adenosyl-L-methionine (SAM) recycling pathway from S-adenosyl-L-homocysteine (SAH) produced from SAM-dependent methylation reactions. May also be involved in the recycling of 5'-deoxyadenosine, whereupon the 5'-deoxyribose moiety of 5'-deoxyinosine is further metabolized to deoxyhexoses used for the biosynthesis of aromatic amino acids in methanogens. The chain is 5'-deoxyadenosine deaminase from Methanospirillum hungatei JF-1 (strain ATCC 27890 / DSM 864 / NBRC 100397 / JF-1).